The chain runs to 1103 residues: MLAGRPGAQSAGAGVGAGPPDAPGARDGGGRPRPGAYLDMKIHLEKNLEEERQMLLQQQKLCRNRARKYFMESNRRRKAFEEKRQKQEEREYQIRERILQQRKQKFEEVTEKFQRAHVPVSQRRRAVFQNPVPPLEEALKQIQESNLKSEVNIPLFHRPATNWRAIDSALPSTLSKNDHKHQKHLVRRINRNKEMKENNIANLATNKNVFQLKLEETQKLLEDQHLSDLQKFCDEVNQITNSETLSSIDSLEAGEREEIYITLSMKPSTSTQQNSVPLQSANLQAAHLDCFDEDKLSFSKTQHINNWLTNLDAQNSQPVASFSDILIKSNVLPSWECLNSKEQNPPALSRTVGRTTRTTSDSMVFVCSPSVVALDKKGENTAESNVVRASDPTEGAVQRERPAQMESPTFKVSRAWTTAESLTQETASFSVQERPSELTWESRTASIPASSVTVLSPNLQAGGPLAENNTQIKEIDPVQCSDKLDELKNMEHERINHLNCNKEKYLFSPNFQTTCALQNSNSNDRKQKESGPSAALCNNPPDCDLPEQHSIKHSVHEQNGVRLLKSILKKESRYEHNYLRALVMKQGFKFRHQKAETVRDSIELTKQKGKGAEISKTSKKLRWFDESANLENAVDDCHPVRNRAGMAPRWLQRCHTNSGTYNLTSIPECPVHSAAGKKAKADSVPENATDLGRYEIDSVPLNSSVSLGFSFAKQAWSACRRGESKAPVHASDSKTQKTKPQRGVKFTRRTGSSKVQKGLVQNRKPTVSQPQTSSKANTVAQTQGKLIITHPPPKPPTNIKSGKNMQVSPGQSAIPEHSQNVMTQSCLSPASVLPTEYHLNQGTQESSLPFSDTCSNLPAVSPALPTPYSSECQTLAKANSNGTAFLKDGAVYCTHRSPVCEESYQSFTHRNTEEESILPWRRRINGHQNERTTDSTVTRRKQIVENKWKRLLEQKRKTSGSIGMKYTEQITHFGQNVPPSTTEQIQAPRGVKTEEVSDSTSEFLVAENLMNSSVPEDEILTAINSKHLQKPNLSQPTNVCALSAEEQKILKSLHHLDERLYYVQEAIRKNPSIKNTLQLIPLLSSQPRASLSPDVGSTVQRKY.

Residues 1-12 show a composition bias toward low complexity; the sequence is MLAGRPGAQSAG. Positions 1–36 are disordered; that stretch reads MLAGRPGAQSAGAGVGAGPPDAPGARDGGGRPRPGA. 2 coiled-coil regions span residues 43–116 and 182–222; these read HLEK…FQRA and QKHL…KLLE. Disordered regions lie at residues 380-409 and 723-812; these read NTAE…ESPT and ESKA…PGQS. The segment covering 723-735 has biased composition (basic and acidic residues); sequence ESKAPVHASDSKT. Positions 736-748 are enriched in basic residues; sequence QKTKPQRGVKFTR. Polar residues-rich tracts occupy residues 763–784 and 798–812; these read RKPT…QTQG and NIKS…PGQS.

In terms of assembly, interacts with DCTN1.

The protein localises to the midbody. The protein resides in the cytoplasm. It is found in the cytoskeleton. It localises to the microtubule organizing center. Its subcellular location is the centrosome. The protein localises to the cilium basal body. Participate in cytokinesis. Necessary for microtubules and mitotic spindle organization. Involved in primary cilium formation. In Mus musculus (Mouse), this protein is Centrosomal protein of 126 kDa.